The following is a 167-amino-acid chain: NADH-ubiquinone oxidoreductase chain 6 (167 aa).

The next 4 helical transmembrane spans lie at 24-44 (PYFG…IILA), 54-74 (LLLI…ALVL), 85-105 (VLMK…GGYL), and 135-155 (WLLI…ILEI).

This sequence belongs to the complex I subunit 6 family.

The protein localises to the mitochondrion membrane. The catalysed reaction is a ubiquinone + NADH + 5 H(+)(in) = a ubiquinol + NAD(+) + 4 H(+)(out). Functionally, core subunit of the mitochondrial membrane respiratory chain NADH dehydrogenase (Complex I) that is believed to belong to the minimal assembly required for catalysis. Complex I functions in the transfer of electrons from NADH to the respiratory chain. The immediate electron acceptor for the enzyme is believed to be ubiquinone. The chain is NADH-ubiquinone oxidoreductase chain 6 (MT-ND6) from Myxine glutinosa (Atlantic hagfish).